The following is a 331-amino-acid chain: Very-long-chain 3-oxoacyl-CoA reductase (331 aa).

Residues 15-35 traverse the membrane as a helical segment; the sequence is VQWALAGVGALYISAKVLSYL. NADP(+) contacts are provided by V60, D115, D123, N142, Y209, K213, I242, and S244. Y209 acts as the Proton donor in catalysis. Catalysis depends on K213, which acts as the Lowers pKa of active site Tyr.

The protein belongs to the short-chain dehydrogenases/reductases (SDR) family.

It localises to the endoplasmic reticulum membrane. It catalyses the reaction a very-long-chain (3R)-3-hydroxyacyl-CoA + NADP(+) = a very-long-chain 3-oxoacyl-CoA + NADPH + H(+). The protein operates within lipid metabolism; fatty acid biosynthesis. In terms of biological role, component of the microsomal membrane bound fatty acid elongation system, which produces the 26-carbon very long-chain fatty acids (VLCFA) from palmitate. Catalyzes the reduction of the 3-ketoacyl-CoA intermediate that is formed in each cycle of fatty acid elongation. VLCFAs serve as precursors for ceramide and sphingolipids. The sequence is that of Very-long-chain 3-oxoacyl-CoA reductase from Pyricularia oryzae (strain 70-15 / ATCC MYA-4617 / FGSC 8958) (Rice blast fungus).